The following is a 269-amino-acid chain: Expansin-B9 (269 aa).

Positions Met-1–Cys-24 are cleaved as a signal peptide. An N-linked (GlcNAc...) asparagine glycan is attached at Asn-34. The Expansin-like EG45 domain maps to Gly-63 to Gly-169. Disulfide bonds link Cys-66-Cys-94, Cys-97-Cys-164, and Cys-102-Cys-108. In terms of domain architecture, Expansin-like CBD spans Asn-183 to Ser-264.

This sequence belongs to the expansin family. Expansin B subfamily.

Its subcellular location is the secreted. The protein localises to the cell wall. It localises to the membrane. Its function is as follows. May cause loosening and extension of plant cell walls by disrupting non-covalent bonding between cellulose microfibrils and matrix glucans. No enzymatic activity has been found. May be required for rapid internodal elongation in deepwater rice during submergence. The polypeptide is Expansin-B9 (EXPB9) (Oryza sativa subsp. japonica (Rice)).